Reading from the N-terminus, the 239-residue chain is Probable transcriptional regulatory protein Veis_4238 (239 aa).

Residues 1-22 (MAGHSKWANIQHRKGRQDEKRG) are disordered.

This sequence belongs to the TACO1 family.

The protein localises to the cytoplasm. This chain is Probable transcriptional regulatory protein Veis_4238, found in Verminephrobacter eiseniae (strain EF01-2).